A 79-amino-acid chain; its full sequence is Protein FAM236A (79 aa).

The protein belongs to the FAM236 family.

The sequence is that of Protein FAM236A from Homo sapiens (Human).